Consider the following 276-residue polypeptide: 3-keto-5-aminohexanoate cleavage enzyme (276 aa).

A (5S)-5-amino-3-oxohexanoate-binding site is contributed by E14. 2 residues coordinate Zn(2+): H46 and H48. S82, G85, T106, and N108 together coordinate (5S)-5-amino-3-oxohexanoate. E230 is a Zn(2+) binding site.

The protein belongs to the BKACE family. Kce subfamily. As to quaternary structure, homotetramer. Zn(2+) is required as a cofactor.

The catalysed reaction is (5S)-5-amino-3-oxohexanoate + acetyl-CoA = (3S)-3-aminobutanoyl-CoA + acetoacetate. It participates in amino-acid degradation; L-lysine degradation via acetate pathway. Involved in the anaerobic fermentation of lysine. Catalyzes the reversible reaction between 3-keto-5-aminohexanoate (KAH) and acetyl-CoA to form 3-aminobutyryl-CoA and acetoacetate. The reaction involves the deprotonation of KAH, the nucleophilic addition onto acetyl-CoA and the intramolecular transfer of the CoA moiety. In Cloacimonas acidaminovorans (strain Evry), this protein is 3-keto-5-aminohexanoate cleavage enzyme.